A 63-amino-acid polypeptide reads, in one-letter code: SPbeta prophage-derived uncharacterized protein YomP (63 aa).

The polypeptide is SPbeta prophage-derived uncharacterized protein YomP (yomP) (Bacillus subtilis (strain 168)).